The following is a 55-amino-acid chain: Major pollen allergen Dac g 4 (55 aa).

The sequence is that of Major pollen allergen Dac g 4 from Dactylis glomerata (Orchard grass).